The sequence spans 354 residues: Caffeate O-methyltransferase-like protein 2 (354 aa).

Positions 198, 221, 242, and 255 each coordinate S-adenosyl-L-homocysteine. His-259 (proton acceptor) is an active-site residue. Residues Glu-287 and Glu-319 contribute to the active site.

The protein belongs to the class I-like SAM-binding methyltransferase superfamily. Cation-independent O-methyltransferase family. COMT subfamily.

In Oryza sativa subsp. japonica (Rice), this protein is Caffeate O-methyltransferase-like protein 2.